A 270-amino-acid chain; its full sequence is Glutamate racemase (270 aa).

Substrate contacts are provided by residues 7–8 (DS) and 39–40 (YG). Residue cysteine 70 is the Proton donor/acceptor of the active site. 71-72 (NT) contacts substrate. Cysteine 194 acts as the Proton donor/acceptor in catalysis. 195–196 (TH) is a binding site for substrate.

It belongs to the aspartate/glutamate racemases family.

The enzyme catalyses L-glutamate = D-glutamate. Its pathway is cell wall biogenesis; peptidoglycan biosynthesis. Its function is as follows. Provides the (R)-glutamate required for cell wall biosynthesis. The chain is Glutamate racemase from Cereibacter sphaeroides (strain ATCC 17023 / DSM 158 / JCM 6121 / CCUG 31486 / LMG 2827 / NBRC 12203 / NCIMB 8253 / ATH 2.4.1.) (Rhodobacter sphaeroides).